A 399-amino-acid chain; its full sequence is Acetate kinase (399 aa).

Asn-9 lines the Mg(2+) pocket. ATP is bound at residue Lys-16. Position 90 (Arg-90) interacts with substrate. Asp-147 (proton donor/acceptor) is an active-site residue. Residues His-207–Gly-211, Asp-281–Arg-283, and Gly-333–Asn-337 each bind ATP. Glu-387 is a binding site for Mg(2+).

The protein belongs to the acetokinase family. As to quaternary structure, homodimer. Requires Mg(2+) as cofactor. It depends on Mn(2+) as a cofactor.

The protein localises to the cytoplasm. It carries out the reaction acetate + ATP = acetyl phosphate + ADP. It participates in metabolic intermediate biosynthesis; acetyl-CoA biosynthesis; acetyl-CoA from acetate: step 1/2. Its function is as follows. Catalyzes the formation of acetyl phosphate from acetate and ATP. Can also catalyze the reverse reaction. This is Acetate kinase from Mycobacterium sp. (strain KMS).